A 416-amino-acid chain; its full sequence is 3-oxoacyl-[acyl-carrier-protein] synthase 1 (416 aa).

In terms of domain architecture, Ketosynthase family 3 (KS3) spans 11-415 (FPSVVVTAVT…GHNVALAFGR (405 aa)). Active-site for beta-ketoacyl synthase activity residues include Cys-171, His-311, and His-345. 2 residues coordinate substrate: His-311 and His-345.

This sequence belongs to the thiolase-like superfamily. Beta-ketoacyl-ACP synthases family.

It is found in the cytoplasm. The enzyme catalyses an ultra-long-chain mono-unsaturated fatty acyl-[ACP] + malonyl-[ACP] + H(+) = a 3-oxo-ultra-long-chain mono-unsaturated fatty acyl-[ACP] + holo-[ACP] + CO2. Its pathway is lipid metabolism; mycolic acid biosynthesis. Part of the mycobacterial fatty acid elongation system FAS-II, which is involved in mycolic acid biosynthesis. Catalyzes the elongation of long chain acyl-ACP substrates by the addition of two carbons from malonyl-ACP to an acyl acceptor. Involved in the initial extension of the mycolate chain and forms monounsaturated fatty acids that averaged 40 carbons in length. This chain is 3-oxoacyl-[acyl-carrier-protein] synthase 1 (kasA), found in Mycobacterium tuberculosis (strain ATCC 35801 / TMC 107 / Erdman).